A 337-amino-acid chain; its full sequence is 4-hydroxy-3-methylbut-2-enyl diphosphate reductase (337 aa).

Residue Cys25 participates in [4Fe-4S] cluster binding. Positions 54 and 87 each coordinate (2E)-4-hydroxy-3-methylbut-2-enyl diphosphate. Dimethylallyl diphosphate is bound by residues His54 and His87. 2 residues coordinate isopentenyl diphosphate: His54 and His87. Cys109 contributes to the [4Fe-4S] cluster binding site. Position 137 (His137) interacts with (2E)-4-hydroxy-3-methylbut-2-enyl diphosphate. Residue His137 participates in dimethylallyl diphosphate binding. Residue His137 participates in isopentenyl diphosphate binding. The Proton donor role is filled by Glu139. Residue Thr177 participates in (2E)-4-hydroxy-3-methylbut-2-enyl diphosphate binding. Cys207 lines the [4Fe-4S] cluster pocket. (2E)-4-hydroxy-3-methylbut-2-enyl diphosphate-binding residues include Ser235, Ser236, Asn237, and Ser280. Positions 235, 236, 237, and 280 each coordinate dimethylallyl diphosphate. Positions 235, 236, 237, and 280 each coordinate isopentenyl diphosphate.

The protein belongs to the IspH family. Requires [4Fe-4S] cluster as cofactor.

The enzyme catalyses isopentenyl diphosphate + 2 oxidized [2Fe-2S]-[ferredoxin] + H2O = (2E)-4-hydroxy-3-methylbut-2-enyl diphosphate + 2 reduced [2Fe-2S]-[ferredoxin] + 2 H(+). The catalysed reaction is dimethylallyl diphosphate + 2 oxidized [2Fe-2S]-[ferredoxin] + H2O = (2E)-4-hydroxy-3-methylbut-2-enyl diphosphate + 2 reduced [2Fe-2S]-[ferredoxin] + 2 H(+). It functions in the pathway isoprenoid biosynthesis; dimethylallyl diphosphate biosynthesis; dimethylallyl diphosphate from (2E)-4-hydroxy-3-methylbutenyl diphosphate: step 1/1. The protein operates within isoprenoid biosynthesis; isopentenyl diphosphate biosynthesis via DXP pathway; isopentenyl diphosphate from 1-deoxy-D-xylulose 5-phosphate: step 6/6. Its function is as follows. Catalyzes the conversion of 1-hydroxy-2-methyl-2-(E)-butenyl 4-diphosphate (HMBPP) into a mixture of isopentenyl diphosphate (IPP) and dimethylallyl diphosphate (DMAPP). Acts in the terminal step of the DOXP/MEP pathway for isoprenoid precursor biosynthesis. This chain is 4-hydroxy-3-methylbut-2-enyl diphosphate reductase, found in Leifsonia xyli subsp. xyli (strain CTCB07).